Here is a 564-residue protein sequence, read N- to C-terminus: Quinone-dependent D-lactate dehydrogenase (564 aa).

The region spanning 36–207 (GTGNALAVVR…TNLQEKRYQV (172 aa)) is the FAD-binding PCMH-type domain. FAD is bound by residues 70-74 (AANTG), 78-79 (GS), Gly-137, Ser-144, Gly-154, and Val-256.

The protein belongs to the quinone-dependent D-lactate dehydrogenase family. FAD is required as a cofactor.

The protein resides in the cell inner membrane. The enzyme catalyses (R)-lactate + a quinone = a quinol + pyruvate. Functionally, catalyzes the oxidation of D-lactate to pyruvate. In Haemophilus influenzae (strain ATCC 51907 / DSM 11121 / KW20 / Rd), this protein is Quinone-dependent D-lactate dehydrogenase.